The primary structure comprises 391 residues: Succinyl-diaminopimelate desuccinylase (391 aa).

His78 is a Zn(2+) binding site. Asp80 is a catalytic residue. A Zn(2+)-binding site is contributed by Asp111. Catalysis depends on Glu145, which acts as the Proton acceptor. The Zn(2+) site is built by Glu146, Glu174, and His360.

The protein belongs to the peptidase M20A family. DapE subfamily. In terms of assembly, homodimer. Zn(2+) is required as a cofactor. Requires Co(2+) as cofactor.

The enzyme catalyses N-succinyl-(2S,6S)-2,6-diaminopimelate + H2O = (2S,6S)-2,6-diaminopimelate + succinate. It functions in the pathway amino-acid biosynthesis; L-lysine biosynthesis via DAP pathway; LL-2,6-diaminopimelate from (S)-tetrahydrodipicolinate (succinylase route): step 3/3. Its function is as follows. Catalyzes the hydrolysis of N-succinyl-L,L-diaminopimelic acid (SDAP), forming succinate and LL-2,6-diaminopimelate (DAP), an intermediate involved in the bacterial biosynthesis of lysine and meso-diaminopimelic acid, an essential component of bacterial cell walls. In Albidiferax ferrireducens (strain ATCC BAA-621 / DSM 15236 / T118) (Rhodoferax ferrireducens), this protein is Succinyl-diaminopimelate desuccinylase.